Here is a 434-residue protein sequence, read N- to C-terminus: Enolase (434 aa).

Gln-167 serves as a coordination point for (2R)-2-phosphoglycerate. Catalysis depends on Glu-209, which acts as the Proton donor. The Mg(2+) site is built by Asp-246, Glu-291, and Asp-318. 4 residues coordinate (2R)-2-phosphoglycerate: Lys-343, Arg-372, Ser-373, and Lys-394. Lys-343 serves as the catalytic Proton acceptor.

It belongs to the enolase family. As to quaternary structure, component of the RNA degradosome, a multiprotein complex involved in RNA processing and mRNA degradation. Requires Mg(2+) as cofactor.

It is found in the cytoplasm. The protein localises to the secreted. The protein resides in the cell surface. It carries out the reaction (2R)-2-phosphoglycerate = phosphoenolpyruvate + H2O. Its pathway is carbohydrate degradation; glycolysis; pyruvate from D-glyceraldehyde 3-phosphate: step 4/5. Its function is as follows. Catalyzes the reversible conversion of 2-phosphoglycerate (2-PG) into phosphoenolpyruvate (PEP). It is essential for the degradation of carbohydrates via glycolysis. This Buchnera aphidicola subsp. Acyrthosiphon pisum (strain 5A) protein is Enolase.